The following is a 105-amino-acid chain: Circadian clock oscillator protein KaiB (105 aa).

This sequence belongs to the KaiB family. As to quaternary structure, the KaiABC complex composition changes during the circadian cycle to control KaiC phosphorylation. Complexes KaiC(6), KaiA(2-4):KaiC(6), KaiB(6):KaiC(6) and KaiC(6):KaiB(6):KaiA(12) are among the most important forms, many form cooperatively. Undergoes a major conformational rearrangment; in the free state forms homotetramers as a dimer of dimers. When bound to the CI domain of KaiC switches to a monomeric thioredoxin-fold (KaiB(fs)). KaiB(fs) binds CikA, leading it to dephosphorylate phospho-RpaA.

Its function is as follows. Key component of the KaiABC oscillator complex, which constitutes the main circadian regulator in cyanobacteria. Complex composition changes during the circadian cycle to control KaiC phosphorylation. KaiA stimulates KaiC autophosphorylation, while KaiB sequesters KaiA, leading to KaiC autodephosphorylation. Phospho-Ser-431 KaiC accumulation triggers binding of KaiB to form the KaiB(6):KaiC(6) complex, leading to changes in output regulators CikA and SasA. KaiB switches to a thioredoxin-like fold (KaiB(fs)) when bound to KaiC. KaiB(6):KaiC(6) formation exposes a site for KaiA binding that sequesters KaiA from KaiC, making the KaiC(6):KaiB(6):KaiA(12) complex that results in KaiC autodephosphorylation. In terms of biological role, a metamorphic protein which reversibly switches between an inactive tetrameric fold and a rare, thioredoxin-like monomeric fold (KaiB(fs)). KaiB(fs) binds phospho-KaiC, KaiA and CikA. KaiA and CikA compete for binding to KaiB(fs), and KaiB(fs) and SasA compete for binding to KaiC, thus the clock oscillator and output signal pathway are tightly coupled. The polypeptide is Circadian clock oscillator protein KaiB (Cyanothece sp. (strain PCC 7425 / ATCC 29141)).